Here is a 310-residue protein sequence, read N- to C-terminus: Aspartate carbamoyltransferase catalytic subunit (310 aa).

Residues R57 and T58 each coordinate carbamoyl phosphate. Residue K86 coordinates L-aspartate. Residues R107, H135, and Q138 each coordinate carbamoyl phosphate. R168 and R229 together coordinate L-aspartate. Carbamoyl phosphate is bound by residues L268 and P269.

It belongs to the aspartate/ornithine carbamoyltransferase superfamily. ATCase family. In terms of assembly, heterooligomer of catalytic and regulatory chains.

The catalysed reaction is carbamoyl phosphate + L-aspartate = N-carbamoyl-L-aspartate + phosphate + H(+). It participates in pyrimidine metabolism; UMP biosynthesis via de novo pathway; (S)-dihydroorotate from bicarbonate: step 2/3. Catalyzes the condensation of carbamoyl phosphate and aspartate to form carbamoyl aspartate and inorganic phosphate, the committed step in the de novo pyrimidine nucleotide biosynthesis pathway. In Thermococcus onnurineus (strain NA1), this protein is Aspartate carbamoyltransferase catalytic subunit.